Here is an 86-residue protein sequence, read N- to C-terminus: Large ribosomal subunit protein uL23 (86 aa).

The protein belongs to the universal ribosomal protein uL23 family. Part of the 50S ribosomal subunit. Contacts protein L29.

Functionally, binds to 23S rRNA. One of the proteins that surrounds the polypeptide exit tunnel on the outside of the ribosome. The chain is Large ribosomal subunit protein uL23 from Methanosphaera stadtmanae (strain ATCC 43021 / DSM 3091 / JCM 11832 / MCB-3).